The primary structure comprises 343 residues: Signal peptide peptidase 1 (343 aa).

Residues 1 to 19 lie on the Lumenal side of the membrane; sequence MKTHERAANLALAGLSLAP. The helical transmembrane segment at 20–40 threads the bilayer; it reads LVVKVEPNVNVILTACLAVYV. Residues 41 to 62 are Cytoplasmic-facing; it reads GCYRSVKPTPPSETMSKEHAMR. Residues 63–83 traverse the membrane as a helical segment; it reads FPLVGSAMLLSLFLLFKFLSK. Topologically, residues 84–87 are lumenal; the sequence is DLVN. Residues 88 to 108 form a helical membrane-spanning segment; the sequence is AVLTAYFFILGIAALCATLLP. Residues 109–136 lie on the Cytoplasmic side of the membrane; that stretch reads SIKRFLPKEWNDNAIVWCAPFFHSLSVE. A helical transmembrane segment spans residues 137 to 157; that stretch reads FTKSQVVASIPGFFFCIWYAA. The Lumenal portion of the chain corresponds to 158 to 160; it reads KKH. Residues 161–181 traverse the membrane as a helical segment; sequence WLANNVLGISFCIQGIEMLSL. The Cytoplasmic segment spans residues 182–188; it reads GSFKTGA. Residues 189–209 traverse the membrane as a helical segment; sequence ILLAGLFFYDIFWVFFTPVMV. Asp-198 is a catalytic residue. Residues 210–230 lie on the Lumenal side of the membrane; it reads SVAKSFDAPIKLLFPTGDAAR. Residues 231 to 251 traverse the membrane as a helical segment; that stretch reads PFSMLGLGDIVIPGIFVALAL. Asp-239 is a catalytic residue. At 252–266 the chain is on the cytoplasmic side; it reads RFDVSRGIKNRYFNS. The helical transmembrane segment at 267 to 287 threads the bilayer; the sequence is AFLGYTVGLTVTIIVMNWFQA. At 288–290 the chain is on the lumenal side; the sequence is AQP. Positions 290 to 292 match the PAL motif; it reads PAL. The helical transmembrane segment at 291-311 threads the bilayer; it reads ALLYIVPGVIGFVAVHCLWNG. The Cytoplasmic portion of the chain corresponds to 312 to 343; it reads EVKPLLEYNESKAEEEDAVEEDTDSKQNKKEE. Residues 322–343 form a disordered region; it reads SKAEEEDAVEEDTDSKQNKKEE. Over residues 324 to 334 the composition is skewed to acidic residues; the sequence is AEEEDAVEEDT. Positions 340-343 match the Endoplasmic reticulum targeting signal motif; sequence KKEE.

Belongs to the peptidase A22B family. As to expression, ubiquitous.

It is found in the endoplasmic reticulum membrane. Intramembrane-cleaving aspartic protease (I-CLiP) that cleaves type II membrane signal peptides in the hydrophobic plane of the membrane. Catalyzes intramembrane proteolysis of some signal peptides after they have been cleaved from a preprotein, resulting in the release of the fragment from the ER membrane into the cytoplasm. The sequence is that of Signal peptide peptidase 1 (SPP1) from Oryza sativa subsp. japonica (Rice).